The chain runs to 249 residues: Phosphoadenosine 5'-phosphosulfate reductase (249 aa).

Residue Cys230 is the Nucleophile; cysteine thiosulfonate intermediate of the active site.

This sequence belongs to the PAPS reductase family. CysH subfamily.

Its subcellular location is the cytoplasm. It carries out the reaction [thioredoxin]-disulfide + sulfite + adenosine 3',5'-bisphosphate + 2 H(+) = [thioredoxin]-dithiol + 3'-phosphoadenylyl sulfate. The protein operates within sulfur metabolism; hydrogen sulfide biosynthesis; sulfite from sulfate: step 3/3. In terms of biological role, catalyzes the formation of sulfite from phosphoadenosine 5'-phosphosulfate (PAPS) using thioredoxin as an electron donor. The sequence is that of Phosphoadenosine 5'-phosphosulfate reductase from Synechocystis sp. (strain ATCC 27184 / PCC 6803 / Kazusa).